Reading from the N-terminus, the 200-residue chain is 3-isopropylmalate dehydratase small subunit (200 aa).

It belongs to the LeuD family. LeuD type 1 subfamily. Heterodimer of LeuC and LeuD.

The catalysed reaction is (2R,3S)-3-isopropylmalate = (2S)-2-isopropylmalate. The protein operates within amino-acid biosynthesis; L-leucine biosynthesis; L-leucine from 3-methyl-2-oxobutanoate: step 2/4. Its function is as follows. Catalyzes the isomerization between 2-isopropylmalate and 3-isopropylmalate, via the formation of 2-isopropylmaleate. The protein is 3-isopropylmalate dehydratase small subunit of Campylobacter jejuni subsp. doylei (strain ATCC BAA-1458 / RM4099 / 269.97).